We begin with the raw amino-acid sequence, 268 residues long: Protein c-ets-1-B (268 aa).

A helix HI-1 region spans residues 131 to 139 (FKDYVRDRA). Residues 150–157 (AAALAGYT) are helix HI-2. The segment at residues 162 to 242 (IQLWQFLLEL…AGKRYVYRFV (81 aa)) is a DNA-binding region (ETS). The helix H4 stretch occupies residues 245 to 249 (LQSLL). The segment at 253–259 (PEELHAM) is helix H5.

It belongs to the ETS family. In terms of assembly, binds DNA as a homodimer; homodimerization is required for transcription activation.

Its subcellular location is the nucleus. The protein resides in the cytoplasm. Its activity is regulated as follows. Autoinhibited by a module composed of four alpha helices (HI-1, HI-2, H4, and H5) that flank the DNA-binding ETS domain, reducing the affinity for DNA. Functionally, transcription factor. Directly controls the expression of cytokine and chemokine genes in a wide variety of different cellular contexts. This Xenopus laevis (African clawed frog) protein is Protein c-ets-1-B (ets1-b).